Here is a 542-residue protein sequence, read N- to C-terminus: uncharacterized protein (542 aa).

Low complexity predominate over residues A125 to P138. 4 disordered regions span residues A125–N182, L194–S333, S390–I428, and S459–N487. Over residues Q202 to I213 the composition is skewed to polar residues. Composition is skewed to low complexity over residues S228–N306, N314–S333, S390–N423, and S459–S479.

This is an uncharacterized protein from Dictyostelium discoideum (Social amoeba).